A 160-amino-acid polypeptide reads, in one-letter code: MSPAAGVPEMPALDASGVRLGIVASTWHSRICDALLAGARKVAADSGVENPTVVRVLGAIEIPVVAQELARNHDAVVALGVVIRGQTPHFEYVCDAVTQGITRVSLDASTPVANGVLTTDNEQQALDRAGLPDSAEDKGAQAAGAALSAALTLRELRARS.

Residues Trp27, 59–61 (AIE), and 81–83 (VVI) contribute to the 5-amino-6-(D-ribitylamino)uracil site. Residue 86-87 (QT) participates in (2S)-2-hydroxy-3-oxobutyl phosphate binding. Catalysis depends on His89, which acts as the Proton donor. Asn114 contributes to the 5-amino-6-(D-ribitylamino)uracil binding site. Arg128 contacts (2S)-2-hydroxy-3-oxobutyl phosphate.

It belongs to the DMRL synthase family. Homopentamer.

The catalysed reaction is (2S)-2-hydroxy-3-oxobutyl phosphate + 5-amino-6-(D-ribitylamino)uracil = 6,7-dimethyl-8-(1-D-ribityl)lumazine + phosphate + 2 H2O + H(+). It functions in the pathway cofactor biosynthesis; riboflavin biosynthesis; riboflavin from 2-hydroxy-3-oxobutyl phosphate and 5-amino-6-(D-ribitylamino)uracil: step 1/2. Catalyzes the formation of 6,7-dimethyl-8-ribityllumazine by condensation of 5-amino-6-(D-ribitylamino)uracil with 3,4-dihydroxy-2-butanone 4-phosphate. This is the penultimate step in the biosynthesis of riboflavin. This Mycobacterium avium (strain 104) protein is 6,7-dimethyl-8-ribityllumazine synthase.